The primary structure comprises 314 residues: Very long chain fatty acid elongase 4 (314 aa).

The N-linked (GlcNAc...) asparagine glycan is linked to Asn20. 7 consecutive transmembrane segments (helical) span residues 42-62, 78-98, 127-147, 165-185, 188-208, 217-237, and 247-267; these read LMQSPWPTLSISTLYLLFVWL, VLIIYNFGMVLLNFFIFRELF, ALWWYFVSKGVEYLDTVFFIL, MFTLWWIGIKWVAGGQAFFGA, NSFIHVIMYSYYGLAAFGPWI, YLTMLQLVQFHVTIGHTALSL, and MHWALIAYAISFIFLFLNFYI. The interval 274 to 314 is disordered; sequence KKPKTGKTAMNGISANGVSKSEKQLVIENGKKQKNGKAKGD. Residues 293–304 show a composition bias toward basic and acidic residues; the sequence is KSEKQLVIENGK. Over residues 305-314 the composition is skewed to basic residues; the sequence is KQKNGKAKGD. The Di-lysine motif signature appears at 310–314; it reads KAKGD.

The protein belongs to the ELO family. ELOVL4 subfamily. Oligomer. In terms of processing, N-glycosylated. Expressed mainly in retina. Also expressed in skin and thymus.

It localises to the endoplasmic reticulum membrane. It carries out the reaction a very-long-chain acyl-CoA + malonyl-CoA + H(+) = a very-long-chain 3-oxoacyl-CoA + CO2 + CoA. The catalysed reaction is hexacosanoyl-CoA + malonyl-CoA + H(+) = 3-oxooctacosanyol-CoA + CO2 + CoA. The enzyme catalyses octacosanoyl-CoA + malonyl-CoA + H(+) = 3-oxo-triacontanoyl-CoA + CO2 + CoA. It catalyses the reaction triacontanoyl-CoA + malonyl-CoA + H(+) = 3-oxo-dotriacontanoyl-CoA + CO2 + CoA. It carries out the reaction (19Z,22Z,25Z,28Z,31Z)-tetratriacontapentaenoyl-CoA + malonyl-CoA + H(+) = 3-oxo-(21Z,24Z,27Z,30Z,33Z)-hexatriacontapentaenoyl-CoA + CO2 + CoA. The catalysed reaction is (4Z,7Z,10Z,13Z,16Z,19Z)-docosahexaenoyl-CoA + malonyl-CoA + H(+) = 3-oxo-(6Z,9Z,12Z,15Z,18Z,21Z)-tetracosahexaenoyl-CoA + CO2 + CoA. The enzyme catalyses (7Z,10Z,13Z,16Z)-docosatetraenoyl-CoA + malonyl-CoA + H(+) = (9Z,12Z,15Z,18Z)-3-oxotetracosatetraenoyl-CoA + CO2 + CoA. It catalyses the reaction (11Z,14Z,17Z,20Z,23Z)-hexacosapentaenoyl-CoA + malonyl-CoA + H(+) = 3-oxo-(13Z,16Z,19Z,22Z,25Z)-octacosapentaenoyl-CoA + CO2 + CoA. It carries out the reaction (13Z,16Z,19Z,22Z,25Z)-octacosapentaenoyl-CoA + malonyl-CoA + H(+) = 3-oxo-(15Z,18Z,21Z,24Z,27Z)-triacontapentaenoyl-CoA + CO2 + CoA. The catalysed reaction is (15Z,18Z,21Z,24Z,27Z)-triacontapentaenoyl-CoA + malonyl-CoA + H(+) = 3-oxo-(17Z,20Z,23Z,26Z,29Z)-dotriacontapentaenoyl-CoA + CO2 + CoA. The enzyme catalyses (17Z,20Z,23Z,26Z,29Z)-dotriacontapentaenoyl-CoA + malonyl-CoA + H(+) = 3-oxo-(19Z,22Z,25Z,28Z,31Z)-tetratriacontapentaenoyl-CoA + CO2 + CoA. It catalyses the reaction (21Z,24Z,27Z,30Z,33Z)-hexatriacontapentaenoyl-CoA + malonyl-CoA + H(+) = 3-oxo-(23Z,26Z,29Z,32Z,35Z)-octatriacontapentaenoyl-CoA + CO2 + CoA. It carries out the reaction (11Z,14Z,17Z,20Z)-hexacosatetraenoyl-CoA + malonyl-CoA + H(+) = (13Z,16Z,19Z,22Z)-3-oxooctacosatetraenoyl-CoA + CO2 + CoA. The catalysed reaction is (13Z,16Z,19Z,22Z)-octacosatetraenoyl-CoA + malonyl-CoA + H(+) = 3-oxo-(15Z,18Z,21Z,24Z)-triacontatetraenoyl-CoA + CO2 + CoA. The enzyme catalyses (15Z,18Z,21Z,24Z)-triacontatetraenoyl-CoA + malonyl-CoA + H(+) = 3-oxo-(17Z,20Z,23Z,26Z)-dotriacontatetraenoyl-CoA + CO2 + CoA. It catalyses the reaction (17Z,20Z,23Z,26Z)-dotriacontatetraenoyl-CoA + malonyl-CoA + H(+) = 3-oxo-(19Z,22Z,25Z,28Z)-tetratriacontatetraenoyl-CoA + CO2 + CoA. It carries out the reaction (19Z,22Z,25Z,28Z)-tetratriacontatetraenoyl-CoA + malonyl-CoA + H(+) = 3-oxo-(21Z,24Z,27Z,30Z)-hexatriacontatetraenoyl-CoA + CO2 + CoA. The catalysed reaction is (21Z,24Z,27Z,30Z)-hexatriacontatetraenoyl-CoA + malonyl-CoA + H(+) = 3-oxo-(23Z,26Z,29Z,32Z)-octatriacontatetraenoyl-CoA + CO2 + CoA. The enzyme catalyses (6Z,9Z,12Z,15Z,18Z,21Z)-tetracosahexaenoyl-CoA + malonyl-CoA + H(+) = 3-oxo-(8Z,11Z,14Z,17Z,20Z,23Z)-hexacosahexaenoyl-CoA + CO2 + CoA. It catalyses the reaction (8Z,11Z,14Z,17Z,20Z,23Z)-hexacosahexaenoyl-CoA + malonyl-CoA + H(+) = 3-oxo-(10Z,13Z,16Z,19Z,22Z,25Z)-octacosahexaenoyl-CoA + CO2 + CoA. It carries out the reaction (10Z,13Z,16Z,19Z,22Z,25Z)-octacosahexaenoyl-CoA + malonyl-CoA + H(+) = 3-oxo-(12Z,15Z,18Z,21Z,24Z,27Z)-triacontahexaenoyl-CoA + CO2 + CoA. The catalysed reaction is (12Z,15Z,18Z,21Z,24Z,27Z)-triacontahexaenoyl-CoA + malonyl-CoA + H(+) = 3-oxo-(14Z,17Z,20Z,23Z,26Z,29Z)-dotriacontahexaenoyl-CoA + CO2 + CoA. The enzyme catalyses (14Z,17Z,20Z,23Z,26Z,29Z)-dotriacontahexaenoyl-CoA + malonyl-CoA + H(+) = 3-oxo-(16Z,19Z,22Z,25Z,28Z,31Z)-tetratriacontahexaenoyl-CoA + CO2 + CoA. It catalyses the reaction (16Z,19Z,22Z,25Z,28Z,31Z)-tetratriacontahexaenoyl-CoA + malonyl-CoA + H(+) = 3-oxo-(18Z,21Z,24Z,27Z,30Z,33Z)-hexatriacontahexaenoyl-CoA + CO2 + CoA. It carries out the reaction (9Z,12Z,15Z,18Z,21Z)-tetracosapentaenoyl-CoA + malonyl-CoA + H(+) = 3-oxo-(11Z,14Z,17Z,20Z,23Z)-hexacosapentaenoyl-CoA + CO2 + CoA. Its pathway is lipid metabolism; fatty acid biosynthesis. In terms of biological role, catalyzes the first and rate-limiting reaction of the four reactions that constitute the long-chain fatty acids elongation cycle. This endoplasmic reticulum-bound enzymatic process allows the addition of 2 carbons to the chain of long- and very long-chain fatty acids (VLCFAs) per cycle. Condensing enzyme that catalyzes the synthesis of very long chain saturated (VLC-SFA) and polyunsaturated (PUFA) fatty acids that are involved in multiple biological processes as precursors of membrane lipids and lipid mediators. May play a critical role in early brain and skin development. The protein is Very long chain fatty acid elongase 4 of Macaca fascicularis (Crab-eating macaque).